Reading from the N-terminus, the 266-residue chain is Cell division protein FtsQ (266 aa).

Residues Met1 to Ala31 are Cytoplasmic-facing. Residues Ile32–Phe52 traverse the membrane as a helical segment. Over Thr53–Tyr266 the chain is Periplasmic. The 69-residue stretch at Phe72–Arg140 folds into the POTRA domain.

This sequence belongs to the FtsQ/DivIB family. FtsQ subfamily.

Its subcellular location is the cell inner membrane. Its function is as follows. Essential cell division protein. The chain is Cell division protein FtsQ from Rickettsia typhi (strain ATCC VR-144 / Wilmington).